A 367-amino-acid polypeptide reads, in one-letter code: Putative ionic transporter y4hA (367 aa).

11 consecutive transmembrane segments (helical) span residues 12 to 32 (VPLW…MTLA), 39 to 59 (SVVL…ASVH), 74 to 94 (AILL…SLML), 108 to 128 (VFAA…VLGG), 143 to 163 (AALA…NFVT), 172 to 192 (AIQL…FLFV), 221 to 241 (LAAG…AMLL), 249 to 269 (VEAL…VVLL), 291 to 311 (VLGS…AISV), 318 to 338 (ALGL…VGTI), and 347 to 367 (VLQG…SAIP).

The protein belongs to the Ca(2+):cation antiporter (CaCA) (TC 2.A.19) family.

It localises to the cell membrane. Its function is as follows. Possible cation transporter. This Sinorhizobium fredii (strain NBRC 101917 / NGR234) protein is Putative ionic transporter y4hA.